Reading from the N-terminus, the 201-residue chain is Large ribosomal subunit protein uL4 (201 aa).

The interval 45–66 is disordered; the sequence is AQLTRSEVSGGGKKPWRQKGTG.

The protein belongs to the universal ribosomal protein uL4 family. In terms of assembly, part of the 50S ribosomal subunit.

Functionally, one of the primary rRNA binding proteins, this protein initially binds near the 5'-end of the 23S rRNA. It is important during the early stages of 50S assembly. It makes multiple contacts with different domains of the 23S rRNA in the assembled 50S subunit and ribosome. Forms part of the polypeptide exit tunnel. This chain is Large ribosomal subunit protein uL4, found in Aeromonas salmonicida (strain A449).